A 590-amino-acid chain; its full sequence is Aspartate--tRNA(Asp/Asn) ligase (590 aa).

Glutamate 176 serves as a coordination point for L-aspartate. Positions 200 to 203 (QLFK) are aspartate. L-aspartate-binding residues include arginine 222 and histidine 451. An ATP-binding site is contributed by 222-224 (RDE). Glutamate 485 provides a ligand contact to ATP. Arginine 492 provides a ligand contact to L-aspartate. Residue 537 to 540 (GIDR) coordinates ATP.

It belongs to the class-II aminoacyl-tRNA synthetase family. Type 1 subfamily. As to quaternary structure, homodimer.

It is found in the cytoplasm. The catalysed reaction is tRNA(Asx) + L-aspartate + ATP = L-aspartyl-tRNA(Asx) + AMP + diphosphate. Aspartyl-tRNA synthetase with relaxed tRNA specificity since it is able to aspartylate not only its cognate tRNA(Asp) but also tRNA(Asn). Reaction proceeds in two steps: L-aspartate is first activated by ATP to form Asp-AMP and then transferred to the acceptor end of tRNA(Asp/Asn). This is Aspartate--tRNA(Asp/Asn) ligase from Ehrlichia canis (strain Jake).